The following is a 537-amino-acid chain: Protein disulfide isomerase-like 1-5 (537 aa).

A signal peptide spans 1 to 29 (MSLIPKPISKVSTFTFILLILLSFTIIIA). The Thioredoxin 1 domain occupies 58 to 184 (LQEDRPEQQS…IVIWVQKKTG (127 aa)). C106 serves as the catalytic Nucleophile. N-linked (GlcNAc...) asparagine glycans are attached at residues N160, N364, and N416. The Thioredoxin 2 domain occupies 380–526 (LLESDPSPNS…IAVFINEELL (147 aa)). Active-site nucleophile residues include C447 and C450. A disulfide bridge connects residues C447 and C450. N530 is a glycosylation site (N-linked (GlcNAc...) asparagine). Residues 534–537 (KDEL) carry the Prevents secretion from ER motif.

It belongs to the protein disulfide isomerase family. As to expression, widely expressed.

The protein localises to the endoplasmic reticulum lumen. The catalysed reaction is Catalyzes the rearrangement of -S-S- bonds in proteins.. Its function is as follows. Acts as a protein-folding catalyst that interacts with nascent polypeptides to catalyze the formation, isomerization, and reduction or oxidation of disulfide bonds. The protein is Protein disulfide isomerase-like 1-5 (PDIL1-5) of Arabidopsis thaliana (Mouse-ear cress).